A 693-amino-acid polypeptide reads, in one-letter code: FAST kinase domain-containing protein 2, mitochondrial (693 aa).

Residues serine 110 and serine 124 each carry the phosphoserine modification. An RAP domain is found at 618 to 675 (VAVLCVSRSAYCLGSSHPRGFLAMKMRHLNAMGFRVILVNNWEMDKLEMEDAVTFLKT). Serine 692 bears the Phosphoserine mark.

Belongs to the FAST kinase family. Monomer. Found in a complex with GRSF1, DDX28, DHX30 and FASTKD5. Associates with the 16S mitochondrial rRNA (16S mt-rRNA). Forms a regulatory protein-RNA complex, consisting of RCC1L, NGRN, RPUSD3, RPUSD4, TRUB2, FASTKD2 and 16S mt-rRNA.

It localises to the mitochondrion matrix. Its subcellular location is the mitochondrion nucleoid. Its function is as follows. Plays an important role in assembly of the mitochondrial large ribosomal subunit. As a component of a functional protein-RNA module, consisting of RCC1L, NGRN, RPUSD3, RPUSD4, TRUB2, FASTKD2 and 16S mitochondrial ribosomal RNA (16S mt-rRNA), controls 16S mt-rRNA abundance and is required for intra-mitochondrial translation. May play a role in mitochondrial apoptosis. The polypeptide is FAST kinase domain-containing protein 2, mitochondrial (FASTKD2) (Pongo abelii (Sumatran orangutan)).